An 868-amino-acid chain; its full sequence is Thiol protease/hemagglutinin PrtT (868 aa).

Residues 1–27 form the signal peptide; the sequence is MKRIFYTLGLLLLCLPMLQAGPVTRSK. Active-site residues include cysteine 184 and histidine 327.

This sequence belongs to the peptidase C10 family.

In terms of biological role, appears to be specific for arginine-containing peptide bonds. Possesses hemagglutinin activity. The chain is Thiol protease/hemagglutinin PrtT (prtT) from Porphyromonas gingivalis (Bacteroides gingivalis).